A 69-amino-acid chain; its full sequence is Sec-independent protein translocase protein TatA (69 aa).

Residues 1-21 (MFGKLGMPELVLIFAVALVIF) traverse the membrane as a helical segment.

It belongs to the TatA/E family. Forms a complex with TatC.

It is found in the cell membrane. Functionally, part of the twin-arginine translocation (Tat) system that transports large folded proteins containing a characteristic twin-arginine motif in their signal peptide across membranes. TatA could form the protein-conducting channel of the Tat system. This is Sec-independent protein translocase protein TatA from Alkaliphilus metalliredigens (strain QYMF).